The following is a 379-amino-acid chain: MATSETRVLFLSLCLILGKVVLSQFDELWLVGDDDPLNALQTRRERREERCDYSVGKWTFDETYPLYDSSCPYLSSALSCQRNGRPDSYYQKWRWIPKACSLPRFDALKFLGKMRGKRIMLVGDSMMRNQWESLVCLVQSVLPTHRKKLTYNGPTMSFHSLDFETSIEFCWAPLLVELKRGVDRKRVLHLDSIEDNARYWRGVDVLVFDSAHWWTHSQRWSSWDYYMDGNKIFKAMDPMVAYERGLTTWAKWVEINLDPSKTKVIFRTVSPRESGQMCYNQKHPLPSLSSSTKPHVPQQSRVLNKVLRTMKYRVYLYDITTMSAYRRDGHPSVFKRAMHEEEKHHRIAGPSSDCSHWCLPGVPDIWNEMLSSIILTNAV.

Residues valine 8 to glutamine 24 traverse the membrane as a helical; Signal-anchor for type II membrane protein segment. Positions glycine 123–serine 125 match the GDS motif motif. The DCXHWCLPGXXDXWN motif signature appears at aspartate 353–asparagine 367.

Belongs to the PC-esterase family. TBL subfamily.

The protein localises to the membrane. Functionally, may act as a bridging protein that binds pectin and other cell wall polysaccharides. Probably involved in maintaining esterification of pectins. May be involved in the specific O-acetylation of cell wall polymers. This chain is Protein trichome birefringence-like 36 (TBL36), found in Arabidopsis thaliana (Mouse-ear cress).